We begin with the raw amino-acid sequence, 192 residues long: BREX protein BrxB (192 aa).

It belongs to the BrxB family.

Functionally, BREX systems (bacteriophage exclusion) provide immunity against bacteriophage. Part of a type 1 BREX system. This system allows phage adsorption but prevents phage DNA replication, without degradation of the phage DNA. Methylation of bacterial DNA by PglX probably guides self/non-self discrimination. When the brxA-brxB-brxC-pglX and pglZ-brxL operons are transformed into a susceptible B.subtilis strain (BEST7003) they confer resistance to bacteriophages SPbeta, SP16, Zeta, phi3T and SP02 and partial protection to phages SP01 and SP82G (these include lytic and temperate phage). They do not protect against phages phi105, rho10 or rho14. Additionally confers a very slight reduction in efficiency of plasmid transformation. The sequence is that of BREX protein BrxB from Bacillus cereus (strain H3081.97).